We begin with the raw amino-acid sequence, 93 residues long: Acylphosphatase (93 aa).

One can recognise an Acylphosphatase-like domain in the interval 7–93 (CLKAVISGKV…GEFRAFEILR (87 aa)). Active-site residues include Arg22 and Asn40.

It belongs to the acylphosphatase family.

It carries out the reaction an acyl phosphate + H2O = a carboxylate + phosphate + H(+). This chain is Acylphosphatase (acyP), found in Acaryochloris marina (strain MBIC 11017).